The sequence spans 173 residues: Large ribosomal subunit protein uL10 (173 aa).

This sequence belongs to the universal ribosomal protein uL10 family. Part of the ribosomal stalk of the 50S ribosomal subunit. The N-terminus interacts with L11 and the large rRNA to form the base of the stalk. The C-terminus forms an elongated spine to which L12 dimers bind in a sequential fashion forming a multimeric L10(L12)X complex.

Forms part of the ribosomal stalk, playing a central role in the interaction of the ribosome with GTP-bound translation factors. This chain is Large ribosomal subunit protein uL10, found in Oleidesulfovibrio alaskensis (strain ATCC BAA-1058 / DSM 17464 / G20) (Desulfovibrio alaskensis).